Consider the following 416-residue polypeptide: Alpha-1,3/1,6-mannosyltransferase ALG2 (416 aa).

Over 1–84 (MAEEQGRERD…LPRGLGWGGR (84 aa)) the chain is Cytoplasmic. Residues 85–105 (GAAVCAYVRMVFLALYVLFLA) constitute an intramembrane region (helical). Residues 106-416 (DEEFDVVVCD…LYRYVTKLLV (311 aa)) are Cytoplasmic-facing.

Belongs to the glycosyltransferase group 1 family. Glycosyltransferase 4 subfamily.

The protein resides in the endoplasmic reticulum membrane. It carries out the reaction a beta-D-Man-(1-&gt;4)-beta-D-GlcNAc-(1-&gt;4)-alpha-D-GlcNAc-diphospho-di-trans,poly-cis-dolichol + GDP-alpha-D-mannose = an alpha-D-Man-(1-&gt;3)-beta-D-Man-(1-&gt;4)-beta-D-GlcNAc-(1-&gt;4)-alpha-D-GlcNAc-diphospho-di-trans,poly-cis-dolichol + GDP + H(+). The catalysed reaction is an alpha-D-Man-(1-&gt;3)-beta-D-Man-(1-&gt;4)-beta-D-GlcNAc-(1-&gt;4)-alpha-D-GlcNAc-diphospho-di-trans,poly-cis-dolichol + GDP-alpha-D-mannose = an alpha-D-Man-(1-&gt;3)-[alpha-D-Man-(1-&gt;6)]-beta-D-Man-(1-&gt;4)-beta-D-GlcNAc-(1-&gt;4)-alpha-D-GlcNAc-diphospho-di-trans,poly-cis-dolichol + GDP + H(+). The enzyme catalyses a beta-D-Man-(1-&gt;4)-beta-D-GlcNAc-(1-&gt;4)-alpha-D-GlcNAc-diphospho-di-trans,poly-cis-dolichol + GDP-alpha-D-mannose = an alpha-D-Man-(1-&gt;6)-beta-D-Man-(1-&gt;4)-beta-D-GlcNAc-(1-&gt;4)-alpha-D-GlcNAc-diphospho-di-trans,poly-cis-dolichol + GDP + H(+). It catalyses the reaction an alpha-D-Man-(1-&gt;6)-beta-D-Man-(1-&gt;4)-beta-D-GlcNAc-(1-&gt;4)-alpha-D-GlcNAc-diphospho-di-trans,poly-cis-dolichol + GDP-alpha-D-mannose = an alpha-D-Man-(1-&gt;3)-[alpha-D-Man-(1-&gt;6)]-beta-D-Man-(1-&gt;4)-beta-D-GlcNAc-(1-&gt;4)-alpha-D-GlcNAc-diphospho-di-trans,poly-cis-dolichol + GDP + H(+). Its pathway is protein modification; protein glycosylation. Mannosyltransferase that operates in the biosynthetic pathway of dolichol-linked oligosaccharides, the glycan precursors employed in protein asparagine (N)-glycosylation. The assembly of dolichol-linked oligosaccharides begins on the cytosolic side of the endoplasmic reticulum membrane and finishes in its lumen. The sequential addition of sugars to dolichol pyrophosphate produces dolichol-linked oligosaccharides containing fourteen sugars, including two GlcNAcs, nine mannoses and three glucoses. Once assembled, the oligosaccharide is transferred from the lipid to nascent proteins by oligosaccharyltransferases. Catalyzes, on the cytoplasmic face of the endoplasmic reticulum, the addition of the second and third mannose residues to the dolichol-linked oligosaccharide chain, to produce Man3GlcNAc(2)-PP-dolichol core oligosaccharide. Man3GlcNAc(2)-PP-dolichol is a substrate for ALG11, the following enzyme in the biosynthetic pathway. While both alpha 1,3 and alpha 1,6 linkages are possible, the sequential addition of alpha 1,3 followed by alpha 1,6 is probably the preferred route. In Homo sapiens (Human), this protein is Alpha-1,3/1,6-mannosyltransferase ALG2 (ALG2).